A 501-amino-acid polypeptide reads, in one-letter code: Bifunctional purine biosynthesis protein PurH (501 aa).

The region spanning M1–S144 is the MGS-like domain.

Belongs to the PurH family.

It catalyses the reaction (6R)-10-formyltetrahydrofolate + 5-amino-1-(5-phospho-beta-D-ribosyl)imidazole-4-carboxamide = 5-formamido-1-(5-phospho-D-ribosyl)imidazole-4-carboxamide + (6S)-5,6,7,8-tetrahydrofolate. The catalysed reaction is IMP + H2O = 5-formamido-1-(5-phospho-D-ribosyl)imidazole-4-carboxamide. Its pathway is purine metabolism; IMP biosynthesis via de novo pathway; 5-formamido-1-(5-phospho-D-ribosyl)imidazole-4-carboxamide from 5-amino-1-(5-phospho-D-ribosyl)imidazole-4-carboxamide (10-formyl THF route): step 1/1. It functions in the pathway purine metabolism; IMP biosynthesis via de novo pathway; IMP from 5-formamido-1-(5-phospho-D-ribosyl)imidazole-4-carboxamide: step 1/1. This is Bifunctional purine biosynthesis protein PurH from Clostridium botulinum (strain Eklund 17B / Type B).